The primary structure comprises 344 residues: G-protein coupled receptor str-217 (344 aa).

Over 1–10 (MLLFQKTLSR) the chain is Extracellular. A helical transmembrane segment spans residues 11-31 (VAAPISVAANLILILLIIFKS). Residues 32-39 (PAQMGNYK) are Cytoplasmic-facing. Residues 40–60 (YLLIGLSIFEMSYAVLDVVSE) traverse the membrane as a helical segment. Residues 61 to 88 (TTVLSIKKSFVVVVPYKDRSFGQETAMD) lie on the Extracellular side of the membrane. The chain crosses the membrane as a helical span at residues 89 to 109 (INLIYCGFFGFSMGMFVVIFA). The Cytoplasmic segment spans residues 110–128 (YRSFLTTGNTILRKFEGFK). Residues 129–149 (IISWFAYPLFYAIVWILVAWG) form a helical membrane-spanning segment. Over 150-195 (PLASFPEMDIVVRPFLLDELNMTVDEVAYTGRLFYSTIDNSLRYSA) the chain is Extracellular. N-linked (GlcNAc...) asparagine glycosylation occurs at Asn170. The helical transmembrane segment at 196 to 216 (ILTGVLQWVLTASSLFLVIFF) threads the bilayer. Over 217–256 (GLRCYFHYGKLVQLTDVQSIRLRQLQNQLFLALVCQATVP) the chain is Cytoplasmic. A helical membrane pass occupies residues 257 to 277 (LILMHIPVTILYTCCVLNIVF). Topologically, residues 278–279 (NP) are extracellular. Residues 280–300 (FSVATTIALFPAIDPLPTIFI) traverse the membrane as a helical segment. Residues 301 to 344 (VKNYRVALFEFVCPSCLCWSETLKHMGSNRITSYRSNTVNALSM) lie on the Cytoplasmic side of the membrane.

This sequence belongs to the nematode receptor-like protein str family. In terms of tissue distribution, expressed in the ADL chemosensory neurons.

It is found in the cell membrane. Probable G-protein coupled receptor. The protein is G-protein coupled receptor str-217 of Caenorhabditis elegans.